The chain runs to 501 residues: V-type proton ATPase subunit B 2 (501 aa).

ATP is bound at residue Arg-392.

This sequence belongs to the ATPase alpha/beta chains family. As to quaternary structure, V-ATPase is a heteromultimeric enzyme made up of two complexes: the ATP-hydrolytic V1 complex and the proton translocation V0 complex. The V1 complex consists of three catalytic AB heterodimers that form a heterohexamer, three peripheral stalks each consisting of EG heterodimers, one central rotor including subunits D and F, and the regulatory subunits C and H. The proton translocation complex V0 consists of the proton transport subunit a, a ring of proteolipid subunits c9c'', rotary subunit d, subunits e and f, and the accessory subunits vah-19/Ac45 and vah-20/PRR. As to expression, predominantly expressed in male and hermaphrodite testis (at protein level).

It localises to the cytoplasm. Functionally, non-catalytic subunit of the V1 complex of vacuolar(H+)-ATPase (V-ATPase), a multisubunit enzyme composed of a peripheral complex (V1) that hydrolyzes ATP and a membrane integral complex (V0) that translocates protons. V-ATPase is responsible for acidifying and maintaining the pH of intracellular compartments and in some cell types, is targeted to the plasma membrane, where it is responsible for acidifying the extracellular environment. In neurons, required for necrotic cell death probably by promoting intracellular acidification. Required for spermatogenesis where it regulates the fibrous body-membranous organelle (FBMO) morphology in spermatocytes and the acidification of FBMO-derived secretory membranous organelles (MOs) as spermatids mature. This is V-type proton ATPase subunit B 2 from Caenorhabditis elegans.